We begin with the raw amino-acid sequence, 246 residues long: MNNNTTAPTYTLRGLQLIGWRDMQHALDYLFADGQLKQGTLVAINAEKMLTIEDNAEVRELINAAEFKYADGISVVRSVRKKYPQAQVSRVAGADLWEELMARAGKEGTQVFLVGGKPEVLAQTEAKLRNQWNVNIVGSQDGYFKPEQRQALFERIHASGAQIVTVAMGAPKQEIFMRDCRLVHPDALYMGVGGTYDVFTGHVKRAPKIWQTLGLEWLYRLLSQPSRIKRQLRLLRYLRWHYTGNL.

The protein belongs to the glycosyltransferase 26 family.

The enzyme catalyses UDP-N-acetyl-alpha-D-mannosaminouronate + N-acetyl-alpha-D-glucosaminyl-di-trans,octa-cis-undecaprenyl diphosphate = beta-D-ManNAcA-(1-&gt;4)-alpha-D-GlcNAc-di-trans,octa-cis-undecaprenyl diphosphate + UDP + H(+). Its pathway is bacterial outer membrane biogenesis; enterobacterial common antigen biosynthesis. Functionally, catalyzes the synthesis of Und-PP-GlcNAc-ManNAcA (Lipid II), the second lipid-linked intermediate involved in enterobacterial common antigen (ECA) synthesis. The chain is UDP-N-acetyl-D-mannosaminuronic acid transferase from Escherichia coli O1:K1 / APEC.